The chain runs to 108 residues: UPF0145 protein gll1048 (108 aa).

Belongs to the UPF0145 family.

The polypeptide is UPF0145 protein gll1048 (Gloeobacter violaceus (strain ATCC 29082 / PCC 7421)).